Consider the following 346-residue polypeptide: Beta-hexosaminidase (346 aa).

Residues aspartate 62, arginine 70, arginine 134, and 164-165 (KH) each bind substrate. The Proton donor/acceptor role is filled by histidine 177. Residue aspartate 249 is the Nucleophile of the active site.

This sequence belongs to the glycosyl hydrolase 3 family. NagZ subfamily.

It is found in the cytoplasm. It catalyses the reaction Hydrolysis of terminal non-reducing N-acetyl-D-hexosamine residues in N-acetyl-beta-D-hexosaminides.. Its pathway is cell wall biogenesis; peptidoglycan recycling. In terms of biological role, plays a role in peptidoglycan recycling by cleaving the terminal beta-1,4-linked N-acetylglucosamine (GlcNAc) from peptide-linked peptidoglycan fragments, giving rise to free GlcNAc, anhydro-N-acetylmuramic acid and anhydro-N-acetylmuramic acid-linked peptides. The polypeptide is Beta-hexosaminidase (Actinobacillus succinogenes (strain ATCC 55618 / DSM 22257 / CCUG 43843 / 130Z)).